Reading from the N-terminus, the 89-residue chain is Acylphosphatase (89 aa).

The region spanning 3–89 (QKHLQVFGTV…SEDFSDFKSI (87 aa)) is the Acylphosphatase-like domain. Active-site residues include Arg-18 and Asn-36.

The protein belongs to the acylphosphatase family.

The catalysed reaction is an acyl phosphate + H2O = a carboxylate + phosphate + H(+). This chain is Acylphosphatase (acyP), found in Staphylococcus haemolyticus (strain JCSC1435).